The primary structure comprises 202 residues: Protein DEHYDRATION-INDUCED 19 homolog 5 (202 aa).

Residues 88-97 are compositionally biased toward basic residues; it reads SHLLKRRKPS. Positions 88 to 120 are disordered; sequence SHLLKRRKPSRPSSSWPTPSNNSDPYFEGPPQY. Low complexity predominate over residues 98–112; the sequence is RPSSSWPTPSNNSDP.

It belongs to the Di19 family.

The polypeptide is Protein DEHYDRATION-INDUCED 19 homolog 5 (DI19-5) (Oryza sativa subsp. japonica (Rice)).